The chain runs to 348 residues: Transmembrane protease serine 12 (348 aa).

A signal peptide spans 1-20; that stretch reads MRLGLLSVALLFVGSSHLYS. Topologically, residues 21 to 324 are extracellular; sequence DHYSPSGRHR…EHFFHASTQG (304 aa). The disordered stretch occupies residues 24–46; that stretch reads SPSGRHRLGPSPEPAASSQQAEA. Residues 78 to 318 form the Peptidase S1 domain; it reads IIGGTEAQAG…YQKWLTEHFF (241 aa). Residues C107 and C123 are joined by a disulfide bond. Active-site charge relay system residues include H122 and D171. Cystine bridges form between C206-C274, C237-C253, and C264-C294. N-linked (GlcNAc...) asparagine glycosylation is found at N219 and N249. S268 (charge relay system) is an active-site residue. Residues 325-345 traverse the membrane as a helical segment; sequence ILTINILRGQILIALCFVILL. Residues 346–348 are Cytoplasmic-facing; it reads ATT.

This sequence belongs to the peptidase S1 family. In testis, expressed in spermatocytes and spermatids (at protein level).

The protein resides in the cell membrane. Its subcellular location is the cytoplasmic vesicle. It localises to the secretory vesicle. It is found in the acrosome. In terms of biological role, required for male fertility. Plays a critical role in sperm capacitation and acrosome reactions during fertilization, and also plays a role in the regulation of proteins involved in spermatogenesis. Regulates protein pathways that promote chromosomal synapsis formation, double-strand break repair, formation of the inner mitochondrial membrane cristae and apoptosis in developing sperm. Required for normal sperm motility and binding to the zona pellucida, potentially via a role in ADAM3 protein maturation. This Homo sapiens (Human) protein is Transmembrane protease serine 12.